Reading from the N-terminus, the 181-residue chain is Translationally-controlled tumor protein homolog (181 aa).

The region spanning 1–181 is the TCTP domain; that stretch reads MLIYKDIFTD…VKEAIIEEKC (181 aa).

The protein belongs to the TCTP family.

The protein resides in the cytoplasm. Its function is as follows. Involved in calcium binding and microtubule stabilization. The protein is Translationally-controlled tumor protein homolog (tct-1) of Caenorhabditis elegans.